We begin with the raw amino-acid sequence, 602 residues long: Threonine--tRNA ligase (602 aa).

The interval 208–499 (DHRKLGIELK…LTEHCAGEFP (292 aa)) is catalytic. Zn(2+) contacts are provided by C300, H351, and H476.

It belongs to the class-II aminoacyl-tRNA synthetase family. In terms of assembly, homodimer. It depends on Zn(2+) as a cofactor.

It is found in the cytoplasm. It catalyses the reaction tRNA(Thr) + L-threonine + ATP = L-threonyl-tRNA(Thr) + AMP + diphosphate + H(+). Its function is as follows. Catalyzes the attachment of threonine to tRNA(Thr) in a two-step reaction: L-threonine is first activated by ATP to form Thr-AMP and then transferred to the acceptor end of tRNA(Thr). Also edits incorrectly charged L-seryl-tRNA(Thr). In Campylobacter jejuni subsp. doylei (strain ATCC BAA-1458 / RM4099 / 269.97), this protein is Threonine--tRNA ligase.